We begin with the raw amino-acid sequence, 525 residues long: GMP synthase [glutamine-hydrolyzing] (525 aa).

One can recognise a Glutamine amidotransferase type-1 domain in the interval 9–207 (RILILDFGSQ…VLEISGCEAL (199 aa)). The active-site Nucleophile is C86. Residues H181 and E183 contribute to the active site. The region spanning 208–400 (WTPANIVEDA…LGLPYDMVYR (193 aa)) is the GMPS ATP-PPase domain. 235-241 (SGGVDSS) serves as a coordination point for ATP.

Homodimer.

The catalysed reaction is XMP + L-glutamine + ATP + H2O = GMP + L-glutamate + AMP + diphosphate + 2 H(+). It functions in the pathway purine metabolism; GMP biosynthesis; GMP from XMP (L-Gln route): step 1/1. Functionally, catalyzes the synthesis of GMP from XMP. This Ectopseudomonas mendocina (strain ymp) (Pseudomonas mendocina) protein is GMP synthase [glutamine-hydrolyzing].